The primary structure comprises 115 residues: Cytochrome c (115 aa).

Heme c is bound by residues Cys26, Cys29, His30, and Met91.

The protein belongs to the cytochrome c family. In terms of processing, binds 1 heme c group covalently per subunit.

It localises to the mitochondrion intermembrane space. In terms of biological role, electron carrier protein. The oxidized form of the cytochrome c heme group can accept an electron from the heme group of the cytochrome c1 subunit of cytochrome reductase. Cytochrome c then transfers this electron to the cytochrome oxidase complex, the final protein carrier in the mitochondrial electron-transport chain. This chain is Cytochrome c, found in Theileria parva (East coast fever infection agent).